The primary structure comprises 1161 residues: Auxin response factor 19 (1161 aa).

The disordered stretch occupies residues 1–20 (MMKQAQQQPPPPPASSAATT). A DNA-binding region (TF-B3) is located at residues 154-256 (FCKTLTASDT…QLLLGIRRAN (103 aa)). A disordered region spans residues 573–598 (NQMQQQHASSTQGQQPATSQPLLLPQ). Residues 1027-1111 (RTFTKVYKRG…KCIRILSPQE (85 aa)) form the PB1 domain.

Belongs to the ARF family. In terms of assembly, homodimers and heterodimers. As to expression, expressed in roots, culms, leaves and young panicles.

Its subcellular location is the nucleus. Its function is as follows. Auxin response factors (ARFs) are transcriptional factors that bind specifically to the DNA sequence 5'-TGTCTC-3' found in the auxin-responsive promoter elements (AuxREs). This chain is Auxin response factor 19 (ARF19), found in Oryza sativa subsp. japonica (Rice).